Here is a 350-residue protein sequence, read N- to C-terminus: Holliday junction branch migration complex subunit RuvB (350 aa).

Residues 1-183 (MSAERLVNPH…FVAVHRLVFY (183 aa)) form a large ATPase domain (RuvB-L) region. Residues L22, R23, G64, K67, T68, S69, 130-132 (EDF), R173, Y183, and R220 each bind ATP. T68 is a Mg(2+) binding site. A small ATPAse domain (RuvB-S) region spans residues 184-254 (SDAAMTEIVS…VAREALAQLE (71 aa)). The interval 257-350 (ELGLDENDRR…ESGPQQGTLF (94 aa)) is head domain (RuvB-H). DNA contacts are provided by R312 and R317.

This sequence belongs to the RuvB family. Homohexamer. Forms an RuvA(8)-RuvB(12)-Holliday junction (HJ) complex. HJ DNA is sandwiched between 2 RuvA tetramers; dsDNA enters through RuvA and exits via RuvB. An RuvB hexamer assembles on each DNA strand where it exits the tetramer. Each RuvB hexamer is contacted by two RuvA subunits (via domain III) on 2 adjacent RuvB subunits; this complex drives branch migration. In the full resolvosome a probable DNA-RuvA(4)-RuvB(12)-RuvC(2) complex forms which resolves the HJ.

It localises to the cytoplasm. It carries out the reaction ATP + H2O = ADP + phosphate + H(+). Its function is as follows. The RuvA-RuvB-RuvC complex processes Holliday junction (HJ) DNA during genetic recombination and DNA repair, while the RuvA-RuvB complex plays an important role in the rescue of blocked DNA replication forks via replication fork reversal (RFR). RuvA specifically binds to HJ cruciform DNA, conferring on it an open structure. The RuvB hexamer acts as an ATP-dependent pump, pulling dsDNA into and through the RuvAB complex. RuvB forms 2 homohexamers on either side of HJ DNA bound by 1 or 2 RuvA tetramers; 4 subunits per hexamer contact DNA at a time. Coordinated motions by a converter formed by DNA-disengaged RuvB subunits stimulates ATP hydrolysis and nucleotide exchange. Immobilization of the converter enables RuvB to convert the ATP-contained energy into a lever motion, pulling 2 nucleotides of DNA out of the RuvA tetramer per ATP hydrolyzed, thus driving DNA branch migration. The RuvB motors rotate together with the DNA substrate, which together with the progressing nucleotide cycle form the mechanistic basis for DNA recombination by continuous HJ branch migration. Branch migration allows RuvC to scan DNA until it finds its consensus sequence, where it cleaves and resolves cruciform DNA. The polypeptide is Holliday junction branch migration complex subunit RuvB (Chloroflexus aggregans (strain MD-66 / DSM 9485)).